Here is a 581-residue protein sequence, read N- to C-terminus: Pectinesterase 3 (581 aa).

Positions 1–55 (MDTIKSFKGYGKVNELEQQAYEKKTRKRLIIIAVSSIVLIAVIIAAVAGVVIHNR) are cleaved as a signal peptide. Asn-101, Asn-156, Asn-200, Asn-217, and Asn-268 each carry an N-linked (GlcNAc...) asparagine glycan. Residues Thr-348 and Gln-378 each contribute to the substrate site. Asp-401 serves as the catalytic Proton donor. Cys-415 and Cys-435 form a disulfide bridge. Asp-422 functions as the Nucleophile in the catalytic mechanism. Asn-477 carries N-linked (GlcNAc...) asparagine glycosylation. Substrate is bound by residues Arg-486 and Trp-488.

The protein in the N-terminal section; belongs to the PMEI family. This sequence in the C-terminal section; belongs to the pectinesterase family.

The protein resides in the secreted. It localises to the cell wall. It catalyses the reaction [(1-&gt;4)-alpha-D-galacturonosyl methyl ester](n) + n H2O = [(1-&gt;4)-alpha-D-galacturonosyl](n) + n methanol + n H(+). It functions in the pathway glycan metabolism; pectin degradation; 2-dehydro-3-deoxy-D-gluconate from pectin: step 1/5. May have roles in the deposition of pectin in developing tissues and in the wall loosening and cell separation that occurs in cell expansion, fruit ripening and abscission. The protein is Pectinesterase 3 (MPE3) of Phaseolus vulgaris (Kidney bean).